The chain runs to 987 residues: Valine--tRNA ligase (987 aa).

The 'HIGH' region motif lies at 45 to 55; the sequence is PNVTGSLHMGH. Residues 634–638 carry the 'KMSKS' region motif; sequence KMSKS. K637 serves as a coordination point for ATP. Positions 917 to 985 form a coiled coil; sequence VIDIGAEKAR…LSAALARLSE (69 aa).

The protein belongs to the class-I aminoacyl-tRNA synthetase family. ValS type 1 subfamily. Monomer.

The protein resides in the cytoplasm. The catalysed reaction is tRNA(Val) + L-valine + ATP = L-valyl-tRNA(Val) + AMP + diphosphate. Its function is as follows. Catalyzes the attachment of valine to tRNA(Val). As ValRS can inadvertently accommodate and process structurally similar amino acids such as threonine, to avoid such errors, it has a 'posttransfer' editing activity that hydrolyzes mischarged Thr-tRNA(Val) in a tRNA-dependent manner. In Cereibacter sphaeroides (strain ATCC 17029 / ATH 2.4.9) (Rhodobacter sphaeroides), this protein is Valine--tRNA ligase.